Here is a 406-residue protein sequence, read N- to C-terminus: Acetamidase (406 aa).

Residues 387-399 show a composition bias toward low complexity; sequence CRPRSSTSTSPRR. Residues 387–406 are disordered; the sequence is CRPRSSTSTSPRRQGPAEGR.

It belongs to the acetamidase/formamidase family.

The catalysed reaction is a monocarboxylic acid amide + H2O = a monocarboxylate + NH4(+). The enzyme catalyses acetamide + H2O = acetate + NH4(+). Functionally, allows acetamide to be used as a sole carbon or nitrogen source. This chain is Acetamidase (amdA), found in Mycolicibacterium smegmatis (Mycobacterium smegmatis).